We begin with the raw amino-acid sequence, 197 residues long: A-type ATP synthase subunit E 2 (197 aa).

The protein belongs to the V-ATPase E subunit family. Has multiple subunits with at least A(3), B(3), C, D, E, F, H, I and proteolipid K(x).

It is found in the cell membrane. Its function is as follows. Component of the A-type ATP synthase that produces ATP from ADP in the presence of a proton gradient across the membrane. The polypeptide is A-type ATP synthase subunit E 2 (Methanospirillum hungatei JF-1 (strain ATCC 27890 / DSM 864 / NBRC 100397 / JF-1)).